An 868-amino-acid chain; its full sequence is Leucine--tRNA ligase (868 aa).

The 'HIGH' region signature appears at 42–52 (PYPSGKLHMGH). The 'KMSKS' region motif lies at 627–631 (KMSKS). Lysine 630 is a binding site for ATP.

Belongs to the class-I aminoacyl-tRNA synthetase family.

It is found in the cytoplasm. It carries out the reaction tRNA(Leu) + L-leucine + ATP = L-leucyl-tRNA(Leu) + AMP + diphosphate. The polypeptide is Leucine--tRNA ligase (Pseudomonas savastanoi pv. phaseolicola (strain 1448A / Race 6) (Pseudomonas syringae pv. phaseolicola (strain 1448A / Race 6))).